A 471-amino-acid polypeptide reads, in one-letter code: Trigger factor (471 aa).

A PPIase FKBP-type domain is found at 165-244 (GDFVSIDLRA…VQSVKERVLP (80 aa)). A disordered region spans residues 407–471 (VTDASGNPVD…EATAEDPAKS (65 aa)). A compositionally biased stretch (acidic residues) spans 416–443 (DLEELVGGTEEDDVTEDATEDVTEDAAP).

It belongs to the FKBP-type PPIase family. Tig subfamily.

The protein resides in the cytoplasm. It catalyses the reaction [protein]-peptidylproline (omega=180) = [protein]-peptidylproline (omega=0). Functionally, involved in protein export. Acts as a chaperone by maintaining the newly synthesized protein in an open conformation. Functions as a peptidyl-prolyl cis-trans isomerase. This Kineococcus radiotolerans (strain ATCC BAA-149 / DSM 14245 / SRS30216) protein is Trigger factor.